The primary structure comprises 384 residues: Glutamate 5-kinase (384 aa).

Lysine 24 lines the ATP pocket. Residues serine 64, aspartate 149, and asparagine 161 each coordinate substrate. ATP is bound by residues 181–182 (TD) and 223–229 (TGGMRTK). Positions 288–370 (PGAILIDAGA…RDIQPLLGYT (83 aa)) constitute a PUA domain.

Belongs to the glutamate 5-kinase family.

It is found in the cytoplasm. It carries out the reaction L-glutamate + ATP = L-glutamyl 5-phosphate + ADP. The protein operates within amino-acid biosynthesis; L-proline biosynthesis; L-glutamate 5-semialdehyde from L-glutamate: step 1/2. Catalyzes the transfer of a phosphate group to glutamate to form L-glutamate 5-phosphate. This is Glutamate 5-kinase from Xylella fastidiosa (strain 9a5c).